Consider the following 257-residue polypeptide: Cytochrome b561 domain-containing protein At2g30890 (257 aa).

The N-terminal stretch at 1–21 (MEIHHQLLVSLLFLLLPLCSS) is a signal peptide. A Cytochrome b561 domain is found at 22–219 (QENTRSLAID…LFQDKWSYIQ (198 aa)). The next 5 helical transmembrane spans lie at 55-75 (VHGF…IISI), 91-111 (LFFL…IGAV), 125-145 (HQQL…LGFL), 157-177 (WFVG…INIY), and 191-211 (ANLW…VYLF). Histidine 56, histidine 95, histidine 125, and histidine 161 together coordinate heme b. Residues 235-257 (NISTAETGHGYEVEESKPELEKC) form a disordered region. A compositionally biased stretch (basic and acidic residues) spans 243–257 (HGYEVEESKPELEKC).

Heme b serves as cofactor.

It localises to the membrane. The polypeptide is Cytochrome b561 domain-containing protein At2g30890 (Arabidopsis thaliana (Mouse-ear cress)).